The primary structure comprises 261 residues: DNA oxidative demethylase ALKBH2 (261 aa).

The disordered stretch occupies residues 1–57; sequence MDRFLVKGAQGGLLRKQEEQEPTGEEPAVLGGDKESTRKRPRREAPGNGGHSAGPSW. The PCNA-binding signature appears at 3 to 7; it reads RFLVK. Substrate contacts are provided by residues 102-104 and 122-124; these read FGK and YTF. One can recognise a Fe2OG dioxygenase domain in the interval 152 to 257; sequence TFNFVLINRY…RVNLTFRKIL (106 aa). 2-oxoglutarate is bound by residues asparagine 159, tyrosine 161, and histidine 171. Histidine 171 and aspartate 173 together coordinate Fe cation. Residue aspartate 174 coordinates substrate. Positions 236, 248, 252, and 254 each coordinate 2-oxoglutarate. Histidine 236 provides a ligand contact to Fe cation.

The protein belongs to the alkB family. In terms of assembly, interacts with PCNA homotrimer; this interaction is enhanced during the S-phase of the cell cycle. Interacts with nucleolar proteins NCL, UBTF and NPM1. Interacts with XRCC5-XRCC6 heterodimer. Requires Fe(2+) as cofactor. As to expression, detected in colon, small intestine, ovary, testis, prostate, skeletal muscle, heart, liver and urinary bladder.

Its subcellular location is the nucleus. It localises to the nucleolus. It is found in the nucleoplasm. It carries out the reaction a methylated nucleobase within DNA + 2-oxoglutarate + O2 = a nucleobase within DNA + formaldehyde + succinate + CO2. It catalyses the reaction an N(1)-methyl-2'-deoxyadenosine in double-stranded DNA + 2-oxoglutarate + O2 = a 2'-deoxyadenosine in double-stranded DNA + formaldehyde + succinate + CO2 + H(+). The enzyme catalyses an N(1)-methyl-2'-deoxyadenosine in single-stranded DNA + 2-oxoglutarate + O2 = a 2'-deoxyadenosine in single-stranded DNA + formaldehyde + succinate + CO2 + H(+). The catalysed reaction is an N(3)-methyl-2'-deoxycytidine in double-stranded DNA + 2-oxoglutarate + O2 = a 2'-deoxycytidine in double-stranded DNA + formaldehyde + succinate + CO2 + H(+). It carries out the reaction an N(3)-methyl-2'-deoxycytidine in single-stranded DNA + 2-oxoglutarate + O2 = a 2'-deoxycytidine in single-stranded DNA + formaldehyde + succinate + CO2 + H(+). It catalyses the reaction a 1,N(6)-etheno-2'-deoxyadenosine in double-stranded DNA + 2-oxoglutarate + O2 + H2O = a 2'-deoxyadenosine in double-stranded DNA + glyoxal + succinate + CO2. The enzyme catalyses a 1,N(6)-etheno-2'-deoxyadenosine in single-stranded DNA + 2-oxoglutarate + O2 + H2O = a 2'-deoxyadenosine in single-stranded DNA + glyoxal + succinate + CO2. The catalysed reaction is a 3,N(4)-etheno-2'-deoxycytidine in double-stranded DNA + 2-oxoglutarate + O2 + H2O = a 2'-deoxycytidine in double-stranded DNA + glyoxal + succinate + CO2. It carries out the reaction a 3,N(4)-etheno-2'-deoxycytidine in single-stranded DNA + 2-oxoglutarate + O2 + H2O = a 2'-deoxycytidine in single-stranded DNA + glyoxal + succinate + CO2. It catalyses the reaction a 1,N(2)-etheno-2'-deoxyguanosine in double-stranded DNA + 2-oxoglutarate + O2 + H2O = a 2'-deoxyguanosine in double-stranded DNA + glyoxal + succinate + CO2. With respect to regulation, activated by ascorbate and magnesium ions. Functionally, dioxygenase that repairs alkylated nucleic acid bases by direct reversal oxidative dealkylation. Can process both double-stranded (ds) and single-stranded (ss) DNA substrates, with a strong preference for dsDNA. Uses molecular oxygen, 2-oxoglutarate and iron as cofactors to oxidize the alkyl groups that are subsequently released as aldehydes, regenerating the undamaged bases. Probes the base pair stability, locates a weakened base pair and flips the damaged base to accommodate the lesion in its active site for efficient catalysis. Repairs monoalkylated bases, specifically N1-methyladenine and N3-methylcytosine, as well as higher order alkyl adducts such as bases modified with exocyclic bridged adducts known as etheno adducts including 1,N6-ethenoadenine, 3,N4-ethenocytosine and 1,N2-ethenoguanine. Acts as a gatekeeper of genomic integrity under alkylation stress. Efficiently repairs alkylated lesions in ribosomal DNA (rDNA). These lesions can cause ss- and dsDNA strand breaks that severely impair rDNA transcription. In a response mechanism to DNA damage, associates with PCNA at replication forks to repair alkylated adducts prior to replication. The chain is DNA oxidative demethylase ALKBH2 (ALKBH2) from Homo sapiens (Human).